We begin with the raw amino-acid sequence, 109 residues long: CRISPR-associated endoribonuclease Cas2 (109 aa).

Asp8 serves as a coordination point for Mg(2+).

Belongs to the CRISPR-associated endoribonuclease Cas2 protein family. As to quaternary structure, homodimer, forms a heterotetramer with a Cas1 homodimer. Requires Mg(2+) as cofactor.

Functionally, CRISPR (clustered regularly interspaced short palindromic repeat), is an adaptive immune system that provides protection against mobile genetic elements (viruses, transposable elements and conjugative plasmids). CRISPR clusters contain sequences complementary to antecedent mobile elements and target invading nucleic acids. CRISPR clusters are transcribed and processed into CRISPR RNA (crRNA). Functions as a ssRNA-specific endoribonuclease. Involved in the integration of spacer DNA into the CRISPR cassette. The sequence is that of CRISPR-associated endoribonuclease Cas2 from Streptococcus mutans serotype c (strain ATCC 700610 / UA159).